The sequence spans 435 residues: Eukaryotic translation initiation factor 3 subunit E (435 aa).

The region spanning 219-392 is the PCI domain; the sequence is FFNHAKGRDL…GHVVMGTQPL (174 aa).

It belongs to the eIF-3 subunit E family. Component of the eukaryotic translation initiation factor 3 (eIF-3) complex.

The protein localises to the cytoplasm. Functionally, component of the eukaryotic translation initiation factor 3 (eIF-3) complex, which is involved in protein synthesis of a specialized repertoire of mRNAs and, together with other initiation factors, stimulates binding of mRNA and methionyl-tRNAi to the 40S ribosome. The eIF-3 complex specifically targets and initiates translation of a subset of mRNAs involved in cell proliferation. This chain is Eukaryotic translation initiation factor 3 subunit E (eIF3-S6), found in Aedes aegypti (Yellowfever mosquito).